A 198-amino-acid chain; its full sequence is MNKFIVFEGIDGSGKTTQAKMLAEKLNAEYTCEPTTGKIGRTIREVLSGSECKKETLALLFAADRVEHVSEIEKMLQKSHVVTDRYVYSSIIYQTMQGISKEFIYSINFFAKIPDIVVILDVDTEEALKRMEFREKEIFEKIEFQKKIKQEYHKIAELKCSKFEPTYGFVMVNTTGKTPEEVFNELFNKILDKIPDII.

Position 9-16 (9-16) interacts with ATP; the sequence is GIDGSGKT.

It belongs to the thymidylate kinase family.

It catalyses the reaction dTMP + ATP = dTDP + ADP. The chain is Probable thymidylate kinase from Methanococcus vannielii (strain ATCC 35089 / DSM 1224 / JCM 13029 / OCM 148 / SB).